The following is a 741-amino-acid chain: Multifunctional procollagen lysine hydroxylase and glycosyltransferase LH3 (741 aa).

Positions 1–27 (MAASVPEPRLLLLLLLLLPPLPPVTSA) are cleaved as a signal peptide. Residues 28–293 (SDRPRGANPV…FCNLNRRTLP (266 aa)) form a required for glycosyltransferase activity region. 47-49 (VAT) is a UDP binding site. An N-linked (GlcNAc...) asparagine glycan is attached at N66. Residues D115, D118, and H256 each contribute to the Mn(2+) site. Residue 115-117 (DSY) coordinates UDP. Residue 259-262 (GPTK) participates in UDP binding. 2 disulfides stabilise this stretch: C282-C285 and C382-C388. Residues 298-523 (PPRVLLAVFV…EFGRLLSTSH (226 aa)) form an accessory region region. Residue N551 is glycosylated (N-linked (GlcNAc...) asparagine). C566 and C701 form a disulfide bridge. 2-oxoglutarate-binding residues include R602 and Y659. One can recognise a Fe2OG dioxygenase domain in the interval 650–741 (RAVMNFVVRY…RYIMVSFVDP (92 aa)). Residues H670 and D672 each coordinate Fe cation. An important for dimerization region spans residues 675-718 (TFTLNVALNHKGVDYEGGGCRFLRYDCRVSSPRKGWALLHPGRL). N679 provides a ligand contact to 2-oxoglutarate. H722 is a binding site for Fe cation. R732 contributes to the 2-oxoglutarate binding site.

In terms of assembly, homodimer. Fe(2+) serves as cofactor. It depends on L-ascorbate as a cofactor. The cofactor is Mn(2+). Detected in heart and bone.

It is found in the rough endoplasmic reticulum. The protein localises to the endoplasmic reticulum lumen. It localises to the endoplasmic reticulum membrane. Its subcellular location is the secreted. The protein resides in the extracellular space. The catalysed reaction is L-lysyl-[collagen] + 2-oxoglutarate + O2 = (5R)-5-hydroxy-L-lysyl-[collagen] + succinate + CO2. It carries out the reaction (5R)-5-hydroxy-L-lysyl-[collagen] + UDP-alpha-D-galactose = (5R)-5-O-(beta-D-galactosyl)-5-hydroxy-L-lysyl-[collagen] + UDP + H(+). The enzyme catalyses (5R)-5-O-(beta-D-galactosyl)-5-hydroxy-L-lysyl-[collagen] + UDP-alpha-D-glucose = (5R)-5-O-[alpha-D-glucosyl-(1-&gt;2)-beta-D-galactosyl]-5-hydroxy-L-lysyl-[collagen] + UDP + H(+). Multifunctional enzyme that catalyzes a series of post-translational modifications on Lys residues in procollagen. Plays a redundant role in catalyzing the formation of hydroxylysine residues in -Xaa-Lys-Gly- sequences in collagens. Plays a redundant role in catalyzing the transfer of galactose onto hydroxylysine groups, giving rise to galactosyl 5-hydroxylysine. Has an essential role by catalyzing the subsequent transfer of glucose moieties, giving rise to 1,2-glucosylgalactosyl-5-hydroxylysine residues. Catalyzes hydroxylation and glycosylation of Lys residues in the MBL1 collagen-like domain, giving rise to hydroxylysine and 1,2-glucosylgalactosyl-5-hydroxylysine residues. Catalyzes hydroxylation and glycosylation of Lys residues in the ADIPOQ collagen-like domain, giving rise to hydroxylysine and 1,2-glucosylgalactosyl-5-hydroxylysine residues. Essential for normal biosynthesis and secretion of type IV collagens. Essential for normal formation of basement membranes. In Rattus norvegicus (Rat), this protein is Multifunctional procollagen lysine hydroxylase and glycosyltransferase LH3 (Plod3).